The sequence spans 938 residues: AP-2 complex subunit alpha-2 (938 aa).

Residues 11–12, lysine 43, tyrosine 53, and 57–61 each bind a 1,2-diacyl-sn-glycero-3-phospho-(1D-myo-inositol-3,4,5-trisphosphate); these read RG and KYVCK. The segment at 615-681 is disordered; sequence LKKKKGPSTV…TGPPPSSGGG (67 aa). Residues 646 to 667 are compositionally biased toward low complexity; that stretch reads PASTSAASTPSPSADLLGLGAV. Residues 668-677 show a composition bias toward pro residues; the sequence is PPAPTGPPPS.

Belongs to the adaptor complexes large subunit family. Adaptor protein complex 2 (AP-2) is a heterotetramer composed of two large adaptins (alpha-type subunit AP2A1 or AP2A2 and beta-type subunit AP2B1), a medium adaptin (mu-type subunit AP2M1) and a small adaptin (sigma-type subunit AP2S1). Interacts with clathrin. Binds EPN1, EPS15, AMPH, SNAP91 and BIN1. Interacts with HIP1. Interacts with DGKD. Interacts with DENND1A, DENND1B and DENND1C. Interacts with FCHO1 and DAB2. Interacts with ATAT1; this interaction is required for efficient alpha-tubulin acetylation by ATAT1. Interacts with KIAA1107. Together with AP2B1 and AP2M1, it interacts with ADAM10; this interaction facilitates ADAM10 endocytosis from the plasma membrane during long-term potentiation in hippocampal neurons. Interacts with CLN3 (via dileucine motif). Interacts with ABCB11; this interaction regulates cell membrane expression of ABCB11 through its internalization in a clathrin-dependent manner and its subsequent degradation. Interacts with Cacfd1. Interacts with DNAJC6. In terms of tissue distribution, widely expressed.

It is found in the cell membrane. The protein localises to the membrane. The protein resides in the coated pit. Its function is as follows. Component of the adaptor protein complex 2 (AP-2). Adaptor protein complexes function in protein transport via transport vesicles in different membrane traffic pathways. Adaptor protein complexes are vesicle coat components and appear to be involved in cargo selection and vesicle formation. AP-2 is involved in clathrin-dependent endocytosis in which cargo proteins are incorporated into vesicles surrounded by clathrin (clathrin-coated vesicles, CCVs) which are destined for fusion with the early endosome. The clathrin lattice serves as a mechanical scaffold but is itself unable to bind directly to membrane components. Clathrin-associated adaptor protein (AP) complexes which can bind directly to both the clathrin lattice and to the lipid and protein components of membranes are considered to be the major clathrin adaptors contributing the CCV formation. AP-2 also serves as a cargo receptor to selectively sort the membrane proteins involved in receptor-mediated endocytosis. AP-2 seems to play a role in the recycling of synaptic vesicle membranes from the presynaptic surface. AP-2 recognizes Y-X-X-[FILMV] (Y-X-X-Phi) and [ED]-X-X-X-L-[LI] endocytosis signal motifs within the cytosolic tails of transmembrane cargo molecules. AP-2 may also play a role in maintaining normal post-endocytic trafficking through the ARF6-regulated, non-clathrin pathway. During long-term potentiation in hippocampal neurons, AP-2 is responsible for the endocytosis of ADAM10. The AP-2 alpha subunit binds polyphosphoinositide-containing lipids, positioning AP-2 on the membrane. The AP-2 alpha subunit acts via its C-terminal appendage domain as a scaffolding platform for endocytic accessory proteins. The AP-2 alpha and AP-2 sigma subunits are thought to contribute to the recognition of the [ED]-X-X-X-L-[LI] motif. The polypeptide is AP-2 complex subunit alpha-2 (Rattus norvegicus (Rat)).